Here is a 543-residue protein sequence, read N- to C-terminus: Protein GPR108 (543 aa).

Residues 1–32 (MAVSERRGLGRGSPAEWGQRLLLVLLLGGCSG) form the signal peptide. Residues Asn-57 and Asn-109 are each glycosylated (N-linked (GlcNAc...) asparagine). The interval 149–186 (SKPGLPKPQATVPRKVDGGGTSAASKPKSTPAVIQGPS) is disordered. 3 N-linked (GlcNAc...) asparagine glycosylation sites follow: Asn-200, Asn-204, and Asn-228. Helical transmembrane passes span 263–283 (LYMV…SILC), 292–312 (IHWL…FHSI), 336–356 (LLKG…WAFI), 367–387 (VFGI…IIES), 401–421 (ILFL…VWSI), 449–469 (VMVI…QVAV), and 473–493 (WQWL…VLTG). Residue Asn-534 is glycosylated (N-linked (GlcNAc...) asparagine).

The protein belongs to the LU7TM family.

Its subcellular location is the golgi apparatus. It localises to the cis-Golgi network membrane. The protein resides in the trans-Golgi network membrane. It is found in the golgi apparatus membrane. Its function is as follows. May play a role in intracellular immune modulation by activating NF-kappaB response and attenuating Toll-like-receptor response. In terms of biological role, (Microbial infection) Plays an essential function in adeno-associated virus (AAV) transduction across multiple serotypes except AAV5. May play a critical role in mediating the endosomal virus escape or in the AAV virions trafficking from endosomes to the nucleus. This is Protein GPR108 from Homo sapiens (Human).